Consider the following 922-residue polypeptide: TBC1 domain family member 2A (922 aa).

A disordered region spans residues 1–37 (MEDAPERTPSSSESTQPPGLAREPEVVSPGDSEGCAR). Residues 1–168 (MEDAPERTPS…AENGPTLHLK (168 aa)) are interaction with CADH1. Positions 8 to 17 (TPSSSESTQP) are enriched in polar residues. The region spanning 43–141 (PKKLCGYLSK…WLQQLQMKRW (99 aa)) is the PH domain. Positions 228-297 (NKQAQAAAHG…KRQSNTFPFF (70 aa)) are disordered. The span at 262–271 (LPEKEPEDPA) shows a compositional bias: basic and acidic residues. The segment covering 275–295 (PRSSVPSGPTQKPKRQSNTFP) has biased composition (polar residues). The segment at 298-435 (SDGLARSRTA…QKLTEDLAQP (138 aa)) is interaction with RAC1. Coiled coils occupy residues 302-333 (ARSRTAQEKVAALEQQVLMLTKELKSQKELVI), 362-417 (LELV…NHAK), and 443-476 (FLSQQERMEHLKDDMEAYRTQNRFLNSEIHQVTK). Residues 619 to 811 (GVPREHRPRV…RVWDAFLYEG (193 aa)) form the Rab-GAP TBC domain. Residues 869 to 904 (MKQLRQLRAAHRERLEAELRELELLKVEYLQRRASL) adopt a coiled-coil conformation. Position 914 is a phosphoserine (Ser-914).

In terms of assembly, interacts with activated RAC1 and CDH1.

It localises to the cytoplasm. Its subcellular location is the cytoplasmic vesicle. It is found in the cell junction. Acts as a GTPase-activating protein for RAB7A. Signal effector acting as a linker between RAC1 and RAB7A, leading to RAB7A inactivation and subsequent inhibition of cadherin degradation and reduced cell-cell adhesion. The sequence is that of TBC1 domain family member 2A (Tbc1d2) from Mus musculus (Mouse).